Consider the following 248-residue polypeptide: Glutaredoxin domain-containing cysteine-rich protein 2 (248 aa).

2 stretches are compositionally biased toward basic and acidic residues: residues 1–16 (MEDP…DGKP) and 157–172 (LMNK…QHDR). Disordered regions lie at residues 1–20 (MEDP…RKVR) and 150–172 (EEAE…QHDR).

It belongs to the GRXCR2 family. In terms of assembly, interacts with TPRN; the interaction restricts TPRN to the stereocilum basal region.

The protein resides in the cell projection. It localises to the stereocilium. Its function is as follows. Required for hearing. Plays a role in maintaining cochlear stereocilia bundles that are involved in sound detection. Ensures the restriction of TPRN to the basal region of stereocilia in hair cells. In Homo sapiens (Human), this protein is Glutaredoxin domain-containing cysteine-rich protein 2 (GRXCR2).